A 495-amino-acid polypeptide reads, in one-letter code: ATP synthase subunit beta, chloroplastic (495 aa).

172–179 (GGAGVGKT) is an ATP binding site.

This sequence belongs to the ATPase alpha/beta chains family. F-type ATPases have 2 components, CF(1) - the catalytic core - and CF(0) - the membrane proton channel. CF(1) has five subunits: alpha(3), beta(3), gamma(1), delta(1), epsilon(1). CF(0) has four main subunits: a(1), b(1), b'(1) and c(9-12).

It is found in the plastid. It localises to the chloroplast thylakoid membrane. The enzyme catalyses ATP + H2O + 4 H(+)(in) = ADP + phosphate + 5 H(+)(out). In terms of biological role, produces ATP from ADP in the presence of a proton gradient across the membrane. The catalytic sites are hosted primarily by the beta subunits. This is ATP synthase subunit beta, chloroplastic from Pteridium aquilinum (Bracken fern).